A 556-amino-acid polypeptide reads, in one-letter code: Oxygen-dependent choline dehydrogenase (556 aa).

4–33 (DYIIIGAGSAGNVLATRLTEDPNTSVLLLE) provides a ligand contact to FAD. The active-site Proton acceptor is His-473.

It belongs to the GMC oxidoreductase family. FAD is required as a cofactor.

It catalyses the reaction choline + A = betaine aldehyde + AH2. The enzyme catalyses betaine aldehyde + NAD(+) + H2O = glycine betaine + NADH + 2 H(+). The protein operates within amine and polyamine biosynthesis; betaine biosynthesis via choline pathway; betaine aldehyde from choline (cytochrome c reductase route): step 1/1. Its function is as follows. Involved in the biosynthesis of the osmoprotectant glycine betaine. Catalyzes the oxidation of choline to betaine aldehyde and betaine aldehyde to glycine betaine at the same rate. This Shigella flexneri serotype 5b (strain 8401) protein is Oxygen-dependent choline dehydrogenase.